A 98-amino-acid chain; its full sequence is NADH-ubiquinone oxidoreductase chain 4L (98 aa).

Helical transmembrane passes span 1–21 (MSLV…GLLM), 29–49 (SLLC…LMIL), and 61–81 (IILL…LVMV).

It belongs to the complex I subunit 4L family. As to quaternary structure, core subunit of respiratory chain NADH dehydrogenase (Complex I) which is composed of 45 different subunits.

The protein resides in the mitochondrion inner membrane. The catalysed reaction is a ubiquinone + NADH + 5 H(+)(in) = a ubiquinol + NAD(+) + 4 H(+)(out). Functionally, core subunit of the mitochondrial membrane respiratory chain NADH dehydrogenase (Complex I) which catalyzes electron transfer from NADH through the respiratory chain, using ubiquinone as an electron acceptor. Part of the enzyme membrane arm which is embedded in the lipid bilayer and involved in proton translocation. The protein is NADH-ubiquinone oxidoreductase chain 4L (MT-ND4L) of Pantholops hodgsonii (Chiru).